A 338-amino-acid chain; its full sequence is TPR repeat-containing protein MJ0941 (338 aa).

8 TPR repeats span residues 27 to 62 (LEAVANVLRAYRELFEGNLIKALYYVDKALELEPDF), 63 to 96 (YLALFLKGLALSAKGEIKEAITTFEELLSYESKN), 97 to 130 (PITWVFVGQLYGMSGNCDEALKCYNKALGIENRF), 131 to 164 (LSAFLLKTICLEFLGEYDELLKCYNEVLTYTPNF), 165 to 198 (VPMWVKKAEILRKLGRYEDALLCLNRALELKPHD), 199 to 232 (KNALYLKGVLLKRMGKFREALECFKKLIDELNVK), 268 to 301 (VALWYFKGELYERLGKLDEALKCYEKVIELQPHY), and 302 to 335 (IKALLSKARIYERQGNIEAAIEYYNKAVENIHKD).

This is TPR repeat-containing protein MJ0941 from Methanocaldococcus jannaschii (strain ATCC 43067 / DSM 2661 / JAL-1 / JCM 10045 / NBRC 100440) (Methanococcus jannaschii).